We begin with the raw amino-acid sequence, 180 residues long: Large ribosomal subunit protein uL22 (180 aa).

The disordered stretch occupies residues 111–180 (VVVESRPAKD…ETSDAKGGSD (70 aa)). Residues 142-166 (PAKKAPAKKAPAKKAPAKTAAKKTP) show a composition bias toward basic residues. The span at 171–180 (ETSDAKGGSD) shows a compositional bias: basic and acidic residues.

This sequence belongs to the universal ribosomal protein uL22 family. In terms of assembly, part of the 50S ribosomal subunit.

Functionally, this protein binds specifically to 23S rRNA; its binding is stimulated by other ribosomal proteins, e.g. L4, L17, and L20. It is important during the early stages of 50S assembly. It makes multiple contacts with different domains of the 23S rRNA in the assembled 50S subunit and ribosome. The globular domain of the protein is located near the polypeptide exit tunnel on the outside of the subunit, while an extended beta-hairpin is found that lines the wall of the exit tunnel in the center of the 70S ribosome. This is Large ribosomal subunit protein uL22 from Mycobacterium avium (strain 104).